The sequence spans 76 residues: Small ribosomal subunit protein bS18 (76 aa).

It belongs to the bacterial ribosomal protein bS18 family. As to quaternary structure, part of the 30S ribosomal subunit. Forms a tight heterodimer with protein bS6.

In terms of biological role, binds as a heterodimer with protein bS6 to the central domain of the 16S rRNA, where it helps stabilize the platform of the 30S subunit. This Desulfitobacterium hafniense (strain Y51) protein is Small ribosomal subunit protein bS18.